We begin with the raw amino-acid sequence, 228 residues long: uncharacterized protein (228 aa).

The next 6 helical transmembrane spans lie at 14–34 (GWYI…MWLI), 53–73 (FLII…VLIV), 108–128 (GLTF…FFWL), 148–168 (AVKM…PIFF), 178–198 (TIIS…GFSI), and 200–220 (SVVY…YMAI).

It is found in the cell membrane. This is an uncharacterized protein from Bacillus subtilis (strain 168).